A 169-amino-acid polypeptide reads, in one-letter code: CKLF-like MARVEL transmembrane domain-containing protein 2A (169 aa).

4 helical membrane passes run 40 to 60, 69 to 89, 98 to 118, and 136 to 156; these read FWLS…ISAL, HPVL…FIFL, IPFV…CVFL, and YLTA…DMLL. In terms of domain architecture, MARVEL spans 40 to 162; it reads FWLSGHAVFK…DMLLQFQHFR (123 aa).

Belongs to the chemokine-like factor family.

It is found in the membrane. The sequence is that of CKLF-like MARVEL transmembrane domain-containing protein 2A (Cmtm2a) from Mus musculus (Mouse).